The sequence spans 205 residues: Glycerol-3-phosphate acyltransferase (205 aa).

At Met1–Ala3 the chain is on the periplasmic side. The helical transmembrane segment at Ile4–Val24 threads the bilayer. Residues Cys25–Lys52 are Cytoplasmic-facing. A helical membrane pass occupies residues Gly53–Ala73. Residues Tyr74–Pro80 lie on the Periplasmic side of the membrane. A helical membrane pass occupies residues Phe81–Gly101. Residues Phe102–Ala111 lie on the Cytoplasmic side of the membrane. The helical transmembrane segment at Phe112–Leu132 threads the bilayer. Topologically, residues Thr133 to Ser137 are periplasmic. A helical membrane pass occupies residues Gly138–Phe158. At Lys159–Glu205 the chain is on the cytoplasmic side.

This sequence belongs to the PlsY family. As to quaternary structure, probably interacts with PlsX.

It localises to the cell inner membrane. The enzyme catalyses sn-glycerol 3-phosphate + an acyl-CoA = a 1-acyl-sn-glycero-3-phosphate + CoA. It carries out the reaction a fatty acyl-[ACP] + sn-glycerol 3-phosphate = a 1-acyl-sn-glycero-3-phosphate + holo-[ACP]. Its pathway is lipid metabolism; phospholipid metabolism. In terms of biological role, catalyzes the transfer of an acyl group from acyl-ACP to glycerol-3-phosphate (G3P) to form lysophosphatidic acid (LPA). This enzyme can also utilize acyl-CoA as fatty acyl donor, but not acyl-PO(4). This is Glycerol-3-phosphate acyltransferase from Escherichia coli O8 (strain IAI1).